Here is a 336-residue protein sequence, read N- to C-terminus: Gibberellin 2-beta-dioxygenase 7 (336 aa).

Residues 191-291 enclose the Fe2OG dioxygenase domain; it reads LENSFLRLNK…RMSIAFFVCP (101 aa). Fe cation-binding residues include His216, Asp218, and His272. Arg282 is a catalytic residue. Residue Arg282 coordinates 2-oxoglutarate.

The protein belongs to the iron/ascorbate-dependent oxidoreductase family. GA2OX subfamily. Fe(2+) is required as a cofactor.

The enzyme catalyses gibberellin A1 + 2-oxoglutarate + O2 = gibberellin A8 + succinate + CO2. It participates in plant hormone biosynthesis; gibberellin biosynthesis. Functionally, catalyzes the 2-beta-hydroxylation of gibberellins (GA) precursors, rendering them unable to be converted to active GAs. Hydroxylates the C20-GA GA12 and GA53, but is not active on C19-GAs, like GA1, GA4, GA9 and GA20. This chain is Gibberellin 2-beta-dioxygenase 7 (GA2OX7), found in Arabidopsis thaliana (Mouse-ear cress).